The chain runs to 276 residues: 3-methyl-2-oxobutanoate hydroxymethyltransferase (276 aa).

Mg(2+) contacts are provided by Asp44 and Asp83. Residues 44–45 (DS), Asp83, and Lys112 each bind 3-methyl-2-oxobutanoate. Glu114 contributes to the Mg(2+) binding site. The active-site Proton acceptor is Glu180. The tract at residues 256 to 276 (PTEAQSSRMKPDELSRALNAE) is disordered.

This sequence belongs to the PanB family. In terms of assembly, homodecamer; pentamer of dimers. Requires Mg(2+) as cofactor.

The protein resides in the cytoplasm. The catalysed reaction is 3-methyl-2-oxobutanoate + (6R)-5,10-methylene-5,6,7,8-tetrahydrofolate + H2O = 2-dehydropantoate + (6S)-5,6,7,8-tetrahydrofolate. It participates in cofactor biosynthesis; (R)-pantothenate biosynthesis; (R)-pantoate from 3-methyl-2-oxobutanoate: step 1/2. Its function is as follows. Catalyzes the reversible reaction in which hydroxymethyl group from 5,10-methylenetetrahydrofolate is transferred onto alpha-ketoisovalerate to form ketopantoate. The chain is 3-methyl-2-oxobutanoate hydroxymethyltransferase from Gluconacetobacter diazotrophicus (strain ATCC 49037 / DSM 5601 / CCUG 37298 / CIP 103539 / LMG 7603 / PAl5).